Reading from the N-terminus, the 250-residue chain is uncharacterized protein (250 aa).

The first 17 residues, 1–17 (MRTLVLLSSVAILSTLA), serve as a signal peptide directing secretion. N-linked (GlcNAc...) asparagine glycosylation is found at Asn-48, Asn-159, Asn-223, and Asn-239.

The protein resides in the secreted. This is an uncharacterized protein from Caenorhabditis elegans.